We begin with the raw amino-acid sequence, 378 residues long: Succinyl-diaminopimelate desuccinylase (378 aa).

Residue His-68 participates in Zn(2+) binding. The active site involves Asp-70. Asp-101 contributes to the Zn(2+) binding site. Glu-135 serves as the catalytic Proton acceptor. Residues Glu-136, Glu-164, and His-350 each coordinate Zn(2+).

The protein belongs to the peptidase M20A family. DapE subfamily. Homodimer. Zn(2+) is required as a cofactor. The cofactor is Co(2+).

It carries out the reaction N-succinyl-(2S,6S)-2,6-diaminopimelate + H2O = (2S,6S)-2,6-diaminopimelate + succinate. It functions in the pathway amino-acid biosynthesis; L-lysine biosynthesis via DAP pathway; LL-2,6-diaminopimelate from (S)-tetrahydrodipicolinate (succinylase route): step 3/3. Catalyzes the hydrolysis of N-succinyl-L,L-diaminopimelic acid (SDAP), forming succinate and LL-2,6-diaminopimelate (DAP), an intermediate involved in the bacterial biosynthesis of lysine and meso-diaminopimelic acid, an essential component of bacterial cell walls. The polypeptide is Succinyl-diaminopimelate desuccinylase (Acinetobacter baumannii (strain ATCC 17978 / DSM 105126 / CIP 53.77 / LMG 1025 / NCDC KC755 / 5377)).